The following is a 588-amino-acid chain: L-fucose isomerase (588 aa).

Catalysis depends on proton acceptor residues Glu335 and Asp359. 3 residues coordinate Mn(2+): Glu335, Asp359, and His525.

Belongs to the L-fucose isomerase family. Mn(2+) is required as a cofactor.

It localises to the cytoplasm. It catalyses the reaction L-fucose = L-fuculose. Its pathway is carbohydrate degradation; L-fucose degradation; L-lactaldehyde and glycerone phosphate from L-fucose: step 1/3. Functionally, converts the aldose L-fucose into the corresponding ketose L-fuculose. The sequence is that of L-fucose isomerase from Streptococcus pneumoniae (strain 70585).